Reading from the N-terminus, the 175-residue chain is Type II restriction enzyme NgoBV (175 aa).

It catalyses the reaction Endonucleolytic cleavage of DNA to give specific double-stranded fragments with terminal 5'-phosphates.. Its function is as follows. A P subtype restriction enzyme that recognizes the double-stranded sequence 5'-GGNNCC-3'; the cleavage site is unknown. The chain is Type II restriction enzyme NgoBV (ngoBVR) from Neisseria gonorrhoeae.